Reading from the N-terminus, the 407-residue chain is Substance-P receptor (407 aa).

Residues 1–20 (MDNVLPVDSDLFPNTSTNTS) are disordered. Topologically, residues 1–31 (MDNVLPVDSDLFPNTSTNTSESNQFVQPTWQ) are extracellular. Residues Asn14 and Asn18 are each glycosylated (N-linked (GlcNAc...) asparagine). A helical transmembrane segment spans residues 32 to 54 (IVLWAAAYTVIVVTSVVGNVVVI). The Cytoplasmic portion of the chain corresponds to 55 to 64 (WIILAHKRMR). A helical transmembrane segment spans residues 65–86 (TVTNYFLVNLAFAEACMAAFNT). At 87–106 (VVNFTYAVHNVWYYGLFYCK) the chain is on the extracellular side. Cys105 and Cys180 are oxidised to a cystine. Residues 107–128 (FHNFFPIAALFASIYSMTAVAF) traverse the membrane as a helical segment. The Cytoplasmic portion of the chain corresponds to 129–148 (DRYMAIIHPLQPRLSATATK). Residues 149–169 (VVIFVIWVLALLLAFPQGYYS) traverse the membrane as a helical segment. Over 170 to 194 (TTETMPSRVVCMIEWPEHPNRTYEK) the chain is Extracellular. Residues 195–219 (AYHICVTVLIYFLPLLVIGYAYTVV) form a helical membrane-spanning segment. Topologically, residues 220 to 248 (GITLWASEIPGDSSDRYHEQVSAKRKVVK) are cytoplasmic. A helical membrane pass occupies residues 249–270 (MMIVVVCTFAICWLPFHIFFLL). Topologically, residues 271 to 283 (PYINPDLYLKKFI) are extracellular. Residues 284 to 308 (QQVYLASMWLAMSSTMYNPIIYCCL) traverse the membrane as a helical segment. The Cytoplasmic segment spans residues 309–407 (NDRFRLGFKH…SSSFYSNMLA (99 aa)). A lipid anchor (S-palmitoyl cysteine) is attached at Cys322. A disordered region spans residues 362 to 407 (VGAHEDEPEEGPKATPSSLDLTSNGSSRSNSKTMTESSSFYSNMLA). The span at 376 to 407 (TPSSLDLTSNGSSRSNSKTMTESSSFYSNMLA) shows a compositional bias: polar residues.

It belongs to the G-protein coupled receptor 1 family. In terms of assembly, interacts with ARRB1.

Its subcellular location is the cell membrane. Functionally, this is a receptor for the tachykinin neuropeptide substance P. It is probably associated with G proteins that activate a phosphatidylinositol-calcium second messenger system. The rank order of affinity of this receptor to tachykinins is: substance P &gt; substance K &gt; neuromedin K. The protein is Substance-P receptor (Tacr1) of Mus musculus (Mouse).